A 499-amino-acid polypeptide reads, in one-letter code: Glutamate--tRNA ligase (499 aa).

The 'HIGH' region signature appears at 12 to 22 (PSPTGHLHIGN). The short motif at 259–263 (KLSKR) is the 'KMSKS' region element. Residue Lys-262 coordinates ATP.

It belongs to the class-I aminoacyl-tRNA synthetase family. Glutamate--tRNA ligase type 1 subfamily. In terms of assembly, monomer.

Its subcellular location is the cytoplasm. The catalysed reaction is tRNA(Glu) + L-glutamate + ATP = L-glutamyl-tRNA(Glu) + AMP + diphosphate. Functionally, catalyzes the attachment of glutamate to tRNA(Glu) in a two-step reaction: glutamate is first activated by ATP to form Glu-AMP and then transferred to the acceptor end of tRNA(Glu). In Lactobacillus acidophilus (strain ATCC 700396 / NCK56 / N2 / NCFM), this protein is Glutamate--tRNA ligase.